An 85-amino-acid polypeptide reads, in one-letter code: Cell division topological specificity factor (85 aa).

It belongs to the MinE family.

Functionally, prevents the cell division inhibition by proteins MinC and MinD at internal division sites while permitting inhibition at polar sites. This ensures cell division at the proper site by restricting the formation of a division septum at the midpoint of the long axis of the cell. This is Cell division topological specificity factor from Shewanella oneidensis (strain ATCC 700550 / JCM 31522 / CIP 106686 / LMG 19005 / NCIMB 14063 / MR-1).